Reading from the N-terminus, the 842-residue chain is Outer membrane usher protein LpfC (842 aa).

The signal sequence occupies residues 1-21 (MTWTHLPLGNKTSRFTQSALA). Cysteine 819 and cysteine 841 are joined by a disulfide.

This sequence belongs to the fimbrial export usher family.

It is found in the cell outer membrane. Its function is as follows. Involved in the export and assembly of LpfA fimbrial subunits across the outer membrane. This chain is Outer membrane usher protein LpfC (lpfC), found in Salmonella typhimurium (strain LT2 / SGSC1412 / ATCC 700720).